The following is a 1572-amino-acid chain: Multiple epidermal growth factor-like domains protein 6 (1572 aa).

The signal sequence occupies residues 1–26 (MPVGVEARASWRVVALTLLLLPAVPA). Residues 40–121 (MPHVCAEQKL…QKPGQEGCLS (82 aa)) form the EMI domain. Intrachain disulfides connect C44–C107, C73–C79, C106–C119, C126–C137, C133–C146, C148–C161, C167–C178, C174–C187, C189–C202, C291–C302, C298–C311, C313–C326, C418–C429, C425–C438, C440–C453, C522–C535, C529–C542, C544–C553, C566–C578, C572–C585, C587–C596, C609–C621, C615–C628, C630–C639, C788–C797, C791–C804, C806–C815, C832–C840, C834–C847, C849–C858, C871–C884, C875–C891, C893–C902, C915–C927, C921–C934, and C936–C945. An EGF-like 1; calcium-binding domain is found at 122 to 162 (DVDECANANGGCEGPCCNTVGGFYCRCPPGYQLQGDGKTCQ). The 41-residue stretch at 163–203 (DVDECRSHNGGCQHRCVNTPGSYLCECKPGFRLHTDGRTCL) folds into the EGF-like 2; calcium-binding domain. The 41-residue stretch at 287–327 (DVDECALGLAQCAHGCLNTQGSFKCVCHAGYELGADGRQCY) folds into the EGF-like 3; calcium-binding domain. The 41-residue stretch at 414 to 454 (DVDECASGHSGCEHHCSNLAGSFQCFCEAGYRLDEDRRGCT) folds into the EGF-like 4; calcium-binding domain. EGF-like domains follow at residues 518 to 554 (FGHD…IICN), 562 to 597 (FGKN…AHCE), 605 to 640 (YGKH…RFCH), 785 to 816 (QEIC…SRCQ), 829 to 859 (QMRC…LSCQ), 867 to 903 (WGPD…PQCE), 911 to 946 (FGPG…SFCE), 997 to 1032 (FGLN…PTCL), 1040 to 1075 (YGKN…LACE), 1083 to 1118 (HGAG…DKCQ), 1131 to 1161 (EEHC…SHCE), 1169 to 1204 (FGEA…PGCE), 1256 to 1291 (YGPG…ADCS), 1299 to 1334 (FGPS…GHCE), 1342 to 1377 (FGKG…PHCE), 1390 to 1420 (LLEC…QACE), and 1428 to 1463 (HGSG…QFCE). N-linked (GlcNAc...) asparagine glycosylation is present at N1000. Intrachain disulfides connect C1001–C1013, C1007–C1020, C1022–C1031, C1044–C1056, C1050–C1063, C1065–C1074, C1087–C1099, C1093–C1106, C1108–C1117, C1134–C1142, C1136–C1149, C1151–C1160, C1173–C1185, C1177–C1192, C1194–C1203, C1260–C1272, C1266–C1279, C1281–C1290, C1303–C1315, C1309–C1322, C1324–C1333, C1346–C1358, C1352–C1365, C1367–C1376, C1393–C1401, C1395–C1408, C1410–C1419, C1432–C1444, C1438–C1451, and C1453–C1462.

Its subcellular location is the secreted. The sequence is that of Multiple epidermal growth factor-like domains protein 6 (Megf6) from Mus musculus (Mouse).